Consider the following 289-residue polypeptide: D-alanine aminotransferase (289 aa).

Tyrosine 31 provides a ligand contact to substrate. Pyridoxal 5'-phosphate is bound at residue arginine 50. Substrate contacts are provided by arginine 99 and histidine 101. Lysine 147 (proton acceptor) is an active-site residue. Lysine 147 is modified (N6-(pyridoxal phosphate)lysine). Glutamate 179 is a pyridoxal 5'-phosphate binding site.

It belongs to the class-IV pyridoxal-phosphate-dependent aminotransferase family. Homodimer. Requires pyridoxal 5'-phosphate as cofactor.

It carries out the reaction D-alanine + 2-oxoglutarate = D-glutamate + pyruvate. In terms of biological role, acts on the D-isomers of alanine, leucine, aspartate, glutamate, aminobutyrate, norvaline and asparagine. The enzyme transfers an amino group from a substrate D-amino acid to the pyridoxal phosphate cofactor to form pyridoxamine and an alpha-keto acid in the first half-reaction. The second half-reaction is the reverse of the first, transferring the amino group from the pyridoxamine to a second alpha-keto acid to form the product D-amino acid via a ping-pong mechanism. This is an important process in the formation of D-alanine and D-glutamate, which are essential bacterial cell wall components. The chain is D-alanine aminotransferase (dat) from Listeria monocytogenes serotype 4b (strain F2365).